We begin with the raw amino-acid sequence, 417 residues long: Guanine nucleotide-exchange factor SEC12 (417 aa).

Residues 1-388 (MGRRRGVELY…QLHLLPSRRS (388 aa)) are Cytoplasmic-facing. Tyr10 carries the post-translational modification 3'-nitrotyrosine. A disordered region spans residues 101 to 135 (KGSKAEKSGSKEQGPRQRKGAPPAEKKSGAQVHPE). Positions 103–115 (SKAEKSGSKEQGP) are enriched in basic and acidic residues. WD repeat units lie at residues 152–191 (SNEP…KVLE), 194–232 (AHEG…TQLQ), and 298–337 (CGHE…RLYY). Residues 389-409 (VPVWLLLLLCVGLIIVTILLL) traverse the membrane as a helical segment. Topologically, residues 410-417 (QTAFPGFL) are lumenal.

As to quaternary structure, interacts with SAR1B (GDP-bound form). Interacts with MIA2; recruits PREB to endoplasmic reticulum exit sites. Interacts with CIDEB; facilitating loading of SCAP-SREBP into COPII vesicles.

Its subcellular location is the endoplasmic reticulum membrane. The protein resides in the nucleus. Functionally, guanine nucleotide exchange factor (GEF) that regulates the assembly of the coat protein complex II/COPII in endoplasmic reticulum (ER) to Golgi vesicle-mediated transport. Selectively activates SAR1A and SAR1B by promoting the exchange of guanosine diphosphate (GDP) for guanosine triphosphate (GTP) in these small GTPases. In their activated GTP-bound state, SAR1A and SAR1B insert into the membrane of the endoplasmic reticulum where they recruit the remainder of the coat protein complex II/COPII which is responsible for both the sorting of proteins and the deformation and budding of membranes into vesicles destined to the Golgi. In terms of biological role, was first identified based on its probable role in the regulation of pituitary gene transcription. Binds to the prolactin gene (PRL) promoter and seems to activate transcription. The polypeptide is Guanine nucleotide-exchange factor SEC12 (Mus musculus (Mouse)).